The primary structure comprises 168 residues: uncharacterized protein (168 aa).

A compositionally biased stretch (basic and acidic residues) spans 1 to 15 (MKEASDREEAPKMVE). The segment at 1–36 (MKEASDREEAPKMVEKNYSTGFRKAHGEKDQSVTKP) is disordered.

It is found in the cytoplasm. This is an uncharacterized protein from Saccharomyces cerevisiae (strain ATCC 204508 / S288c) (Baker's yeast).